A 460-amino-acid polypeptide reads, in one-letter code: Kynureninase (460 aa).

Pyridoxal 5'-phosphate is bound by residues leucine 116, threonine 117, 144–147, serine 199, aspartate 228, histidine 231, and tyrosine 253; that span reads FPSD. Lysine 254 carries the post-translational modification N6-(pyridoxal phosphate)lysine. Residues tryptophan 288 and asparagine 316 each contribute to the pyridoxal 5'-phosphate site.

It belongs to the kynureninase family. Homodimer. It depends on pyridoxal 5'-phosphate as a cofactor.

It is found in the cytoplasm. It catalyses the reaction L-kynurenine + H2O = anthranilate + L-alanine + H(+). The enzyme catalyses 3-hydroxy-L-kynurenine + H2O = 3-hydroxyanthranilate + L-alanine + H(+). Its pathway is amino-acid degradation; L-kynurenine degradation; L-alanine and anthranilate from L-kynurenine: step 1/1. It participates in cofactor biosynthesis; NAD(+) biosynthesis; quinolinate from L-kynurenine: step 2/3. In terms of biological role, catalyzes the cleavage of L-kynurenine (L-Kyn) and L-3-hydroxykynurenine (L-3OHKyn) into anthranilic acid (AA) and 3-hydroxyanthranilic acid (3-OHAA), respectively. In Debaryomyces hansenii (strain ATCC 36239 / CBS 767 / BCRC 21394 / JCM 1990 / NBRC 0083 / IGC 2968) (Yeast), this protein is Kynureninase.